We begin with the raw amino-acid sequence, 542 residues long: Probable folate-biopterin transporter 8, chloroplastic (542 aa).

A chloroplast-targeting transit peptide spans 1–78; the sequence is MERIMINPLL…GVSEFEETAR (78 aa). Residues 24–45 form a disordered region; it reads LSSIHRQQQQQERQSNNNTLFM. Transmembrane regions (helical) follow at residues 103–123, 132–152, 155–175, 181–201, 223–243, 246–266, 308–328, 338–358, 369–389, 404–424, 446–466, and 477–497; these read FPWLALNFHMVHSLALQPSTL, LPMVAKPLYGVLSDVLYIGSG, VPYIAIGVFLQVLAWGSMGIF, VLPSLVACVLLSNLGASITEV, ALMASAAGGVLGNLLGGYLLL, PPKISFLVFSALLSLQLVVSL, LIWAVVSIAMVPLLSGSVFCY, SVIGMSKVIGQLMLLCLTVVY, PLIHIIQLLYGLSILLDYILV, VLCFSSLAEILAQFKILPFAV, LCLSQIVSAFLGVGLANLIGI, and GILIQSLAALAPLCFMHLVPM. The segment at 506–542 is disordered; it reads GKRGISKRSRRNRRVGRVVDKESVTYRRERESEEAQR. The segment covering 509–521 has biased composition (basic residues); the sequence is GISKRSRRNRRVG. Over residues 522–542 the composition is skewed to basic and acidic residues; it reads RVVDKESVTYRRERESEEAQR.

It belongs to the major facilitator superfamily. Folate-biopterin transporter (TC 2.A.71) family.

It localises to the plastid. It is found in the chloroplast membrane. Its function is as follows. Could mediate folate transport. This Arabidopsis thaliana (Mouse-ear cress) protein is Probable folate-biopterin transporter 8, chloroplastic.